The following is a 123-amino-acid chain: Large ribosomal subunit protein eL8 (123 aa).

Belongs to the eukaryotic ribosomal protein eL8 family. In terms of assembly, part of the 50S ribosomal subunit. Probably part of the RNase P complex.

The protein localises to the cytoplasm. Multifunctional RNA-binding protein that recognizes the K-turn motif in ribosomal RNA, the RNA component of RNase P, box H/ACA, box C/D and box C'/D' sRNAs. This Thermococcus kodakarensis (strain ATCC BAA-918 / JCM 12380 / KOD1) (Pyrococcus kodakaraensis (strain KOD1)) protein is Large ribosomal subunit protein eL8.